Here is a 450-residue protein sequence, read N- to C-terminus: 3-keto-steroid reductase erg27 (450 aa).

3 residues coordinate NADP(+): leucine 25, threonine 53, and lysine 59. Residues serine 215 and tyrosine 238 each act as proton donor in the active site. 3 residues coordinate NADP(+): tyrosine 238, lysine 242, and threonine 296. Lysine 242 acts as the Lowers pKa of active site Tyr in catalysis.

The protein belongs to the short-chain dehydrogenases/reductases (SDR) family. ERG27 subfamily. As to quaternary structure, heterotetramer of erg25, erg26, erg27 and erg28. Erg28 acts as a scaffold to tether erg27 and other 4,4-demethylation-related enzymes, forming a demethylation enzyme complex, in the endoplasmic reticulum.

It is found in the endoplasmic reticulum membrane. It localises to the lipid droplet. Its pathway is steroid metabolism; ergosterol biosynthesis. Its function is as follows. Sterol-C4-methyl oxidase; part of the third module of ergosterol biosynthesis pathway that includes the late steps of the pathway. Erg27 is a catalytic component of the C-4 demethylation complex that catalyzes the conversion of 4,4-dimethylfecosterol into fecosterol via 4-methylfecosterol. The third module or late pathway involves the ergosterol synthesis itself through consecutive reactions that mainly occur in the endoplasmic reticulum (ER) membrane. Firstly, the squalene synthase erg9 catalyzes the condensation of 2 farnesyl pyrophosphate moieties to form squalene, which is the precursor of all steroids. Squalene synthase is crucial for balancing the incorporation of farnesyl diphosphate (FPP) into sterol and nonsterol isoprene synthesis. Secondly, squalene is converted into lanosterol by the consecutive action of the squalene epoxidase erg1 and the lanosterol synthase erg7. Then, the delta(24)-sterol C-methyltransferase erg6 methylates lanosterol at C-24 to produce eburicol. Eburicol is the substrate of the sterol 14-alpha demethylase encoded by cyp51A and cyp51B, to yield 4,4,24-trimethyl ergosta-8,14,24(28)-trienol. The C-14 reductase erg24 then reduces the C14=C15 double bond which leads to 4,4-dimethylfecosterol. A sequence of further demethylations at C-4, involving the C-4 demethylation complex containing the C-4 methylsterol oxidases erg25A or erg25B, the sterol-4-alpha-carboxylate 3-dehydrogenase erg26 and the 3-keto-steroid reductase erg27, leads to the production of fecosterol via 4-methylfecosterol. The C-8 sterol isomerase erg2 then catalyzes the reaction which results in unsaturation at C-7 in the B ring of sterols and thus converts fecosterol to episterol. The sterol-C5-desaturase erg3B then catalyzes the introduction of a C-5 double bond in the B ring to produce 5-dehydroepisterol. The 2 other sterol-C5-desaturases, erg3A and erg3C, seem to be less important in ergosterol biosynthesis. The C-22 sterol desaturase erg5 further converts 5-dehydroepisterol into ergosta-5,7,22,24(28)-tetraen-3beta-ol by forming the C-22(23) double bond in the sterol side chain. Finally, ergosta-5,7,22,24(28)-tetraen-3beta-ol is substrate of the C-24(28) sterol reductases erg4A and erg4B to produce ergosterol. Possible alternative sterol biosynthetic pathways might exist from fecosterol to ergosterol, depending on the activities of the erg3 isoforms. The chain is 3-keto-steroid reductase erg27 from Aspergillus fumigatus (strain ATCC MYA-4609 / CBS 101355 / FGSC A1100 / Af293) (Neosartorya fumigata).